We begin with the raw amino-acid sequence, 1133 residues long: Trafficking protein particle complex subunit 11 (1133 aa).

Residue Lys-245 is modified to N6-acetyllysine.

Belongs to the TRAPPC11 family. As to quaternary structure, component of the multisubunit TRAPP (transport protein particle) complex, which includes at least TRAPPC2, TRAPPC2L, TRAPPC3, TRAPPC3L, TRAPPC4, TRAPPC5, TRAPPC8, TRAPPC9, TRAPPC10, TRAPPC11 and TRAPPC12.

The protein localises to the golgi apparatus. It is found in the cis-Golgi network. Involved in endoplasmic reticulum to Golgi apparatus trafficking at a very early stage. In Homo sapiens (Human), this protein is Trafficking protein particle complex subunit 11 (TRAPPC11).